Here is an 808-residue protein sequence, read N- to C-terminus: Na(+)/H(+) antiporter 2 (808 aa).

The next 9 helical transmembrane spans lie at 12–32 (HVAYSCVGIFSSIFSLVSLFV), 36–56 (LYIGESMVASIFGLIVGPHCL), 70–90 (ITLEISRILLCLQVFAVSVEL), 105–125 (LLVPVMTSGWLVIALFVWILV), 128–148 (LNFPASLLMGACITATDPVLA), 174–194 (CNDGLAIPFVFLSLDLLLYPG), 203–223 (WICVTILWECIFGSILGCIIG), 244–264 (FLAFYLILALTCAGFGSMLGV), and 267–287 (LLVSFFAGTAFAWDGWFAAKT). Asn-291 carries N-linked (GlcNAc...) asparagine glycosylation. 5 helical membrane-spanning segments follow: residues 294 to 314 (NVIDVLLNYAYFVYLGSILPW), 319 to 339 (NPDIGLDVWRLILLSLVVIFL), 361 to 381 (AMFIGHFGPIGVGAVFAAITS), 409 to 429 (VMACIWPITCFSIMTSVIVHG), and 432 to 452 (VAVIMLGRYLSTVTLMALPTG). 2 disordered regions span residues 478 to 499 (QRLDKEPSLSPGQIGGRTSGMV) and 541 to 562 (HASTNDSHGTTTANLGTSNGRA). The span at 542–561 (ASTNDSHGTTTANLGTSNGR) shows a compositional bias: polar residues. N-linked (GlcNAc...) asparagine glycans are attached at residues Asn-545 and Asn-602. Positions 774 to 808 (LHSEDEMADDEAESENDMDYEDSDGPASRFKDHAD) are disordered. Residues 779-797 (EMADDEAESENDMDYEDSD) are compositionally biased toward acidic residues.

It belongs to the fungal Na(+)/H(+) exchanger family.

It localises to the membrane. In terms of biological role, sodium export from cell, takes up external protons in exchange for internal sodium ions. Seems to be poorly expressed. This is Na(+)/H(+) antiporter 2 (SOD22) from Zygosaccharomyces rouxii.